Consider the following 245-residue polypeptide: tRNA pseudouridine synthase A (245 aa).

Catalysis depends on Asp-52, which acts as the Nucleophile. Tyr-111 contributes to the substrate binding site.

The protein belongs to the tRNA pseudouridine synthase TruA family. In terms of assembly, homodimer.

The catalysed reaction is uridine(38/39/40) in tRNA = pseudouridine(38/39/40) in tRNA. Formation of pseudouridine at positions 38, 39 and 40 in the anticodon stem and loop of transfer RNAs. The protein is tRNA pseudouridine synthase A of Rickettsia rickettsii (strain Iowa).